A 313-amino-acid polypeptide reads, in one-letter code: Hsp90 co-chaperone Cdc37-like 1 (313 aa).

It belongs to the CDC37 family. As to quaternary structure, forms complexes with Hsp70 and Hsp90.

It is found in the cytoplasm. Functionally, co-chaperone that binds to numerous proteins and promotes their interaction with Hsp70 and Hsp90. The chain is Hsp90 co-chaperone Cdc37-like 1 (cdc37l1) from Danio rerio (Zebrafish).